A 599-amino-acid chain; its full sequence is MFRAQQNAFDDAVAKATDENLTSENWEYILDVCDKVAAEESGAKDAVAAMIKRLAHRNANVQLYTLELANALAQNCGPKIHRELASRSFTDALLRLANDRNTHQQVKSKILERMHDWTRMFSSNPDFGIMEQAYMKLKTQNPNLQPPSKPVKKEITQADRQKEEEELQMALALSIREKSDAGPAPQAESSAPASAPVSQTQAAAPQAVPSGTSAATVSRVRALFDFQPSEPGELQFRKGDIIAVLESVYKDWWKGSLRGQTGIFPLNYVEKLPDPTVEELQREAQMEADVFGQIKNVEKLLTLLSTRSSELNVQDNEEITALYHSTLAIRPKLIELIGKYSQKKDEFTQLNEKFIKARRDYESLLEASMSHPPQPQYARPGQPPYGYPAPTGPHGYPQGAPQPDPQRYFSPRPQDQTHMYPPTSQSPDPRGRTPPAGPTMQQQQQQPPAESFQPMHHRPESTYDNPQELGTSVYDSPVEYPPANQRFQYPPGASAPPGVHQQLQQQQQEYSPSNYSPEDTTNPPTANFPPQPQQSQLPYPTGPAGHQAPPSHQPPPVPGGASKPSPYPSLTPGAPSAGEYQAYNPSQASASSNPASFYR.

Positions 16–145 constitute a VHS domain; it reads ATDENLTSEN…KLKTQNPNLQ (130 aa). 2 disordered regions span residues 140 to 163 and 177 to 212; these read QNPNLQPPSKPVKKEITQADRQKE and EKSDAGPAPQAESSAPASAPVSQTQAAAPQAVPSGT. Basic and acidic residues predominate over residues 151-163; it reads VKKEITQADRQKE. Residues 162-181 enclose the UIM domain; that stretch reads KEEEELQMALALSIREKSDA. The segment covering 181-210 has biased composition (low complexity); it reads AGPAPQAESSAPASAPVSQTQAAAPQAVPS. Positions 215-274 constitute an SH3 domain; it reads ATVSRVRALFDFQPSEPGELQFRKGDIIAVLESVYKDWWKGSLRGQTGIFPLNYVEKLPD. Residues 368-599 form a disordered region; that stretch reads SMSHPPQPQY…ASSNPASFYR (232 aa). Pro residues predominate over residues 381 to 391; the sequence is GQPPYGYPAPT. The span at 413–427 shows a compositional bias: polar residues; the sequence is PQDQTHMYPPTSQSP. The span at 438 to 454 shows a compositional bias: low complexity; that stretch reads PTMQQQQQQPPAESFQP. 2 stretches are compositionally biased toward polar residues: residues 462–474 and 509–525; these read TYDNPQELGTSVY and EYSPSNYSPEDTTNPPT. Low complexity-rich tracts occupy residues 533 to 550 and 580 to 599; these read QQSQLPYPTGPAGHQAPP and YQAYNPSQASASSNPASFYR.

This sequence belongs to the STAM family. In terms of assembly, component of the ESCRT-0 complex composed of HSE1 and VPS27.

It localises to the endosome membrane. Component of the ESCRT-0 complex which is the sorting receptor for ubiquitinated cargo proteins at the multivesicular body (MVB). This Aspergillus clavatus (strain ATCC 1007 / CBS 513.65 / DSM 816 / NCTC 3887 / NRRL 1 / QM 1276 / 107) protein is Class E vacuolar protein-sorting machinery protein hse1 (hse1).